The chain runs to 146 residues: Peptidyl-lysine N-acetyltransferase YiaC (146 aa).

The 143-residue stretch at 1–143 (MIREAQRSEL…PTWIMSWPVV (143 aa)) folds into the N-acetyltransferase domain.

It belongs to the acetyltransferase family.

It catalyses the reaction L-lysyl-[protein] + acetyl-CoA = N(6)-acetyl-L-lysyl-[protein] + CoA + H(+). Its function is as follows. N-epsilon-lysine acetyltransferase that catalyzes acetylation of a large number of proteins. Overexpression inhibits motility. This Escherichia coli (strain K12) protein is Peptidyl-lysine N-acetyltransferase YiaC (yiaC).